The primary structure comprises 330 residues: MTSNLEAQLLALRQEGEKAIAAADTLERLEELRVNYLGKKGELGALLRSMGQMSAEERPKIGAIANTVKESLQTSLDQQRVALEAAQIQVQLEAETLDVTMPGIYSPQGRIHPLNGIIDRALDIFVGMGYTVAQGPEMETDYYNFEALNTPPDHPARDMQDTFYLPDGNLLRTHTSSVQIRYMEREEPPIRVVAPGRVYRRDNVDATHSAVFHQIELLAIDEGLTFTDLKGTIKVFLQAIFGDLPIRFRASYFPFTEPSAEVDLQWNGRWLEVMGCGMVDPNVLKSVGYDPEVYTGFAAGFGVERFAMVLHQIDDIRRLYASDLRFLQQF.

Glu257 lines the Mg(2+) pocket.

Belongs to the class-II aminoacyl-tRNA synthetase family. Phe-tRNA synthetase alpha subunit type 1 subfamily. As to quaternary structure, tetramer of two alpha and two beta subunits. Mg(2+) serves as cofactor.

It is found in the cytoplasm. It carries out the reaction tRNA(Phe) + L-phenylalanine + ATP = L-phenylalanyl-tRNA(Phe) + AMP + diphosphate + H(+). The protein is Phenylalanine--tRNA ligase alpha subunit of Nostoc punctiforme (strain ATCC 29133 / PCC 73102).